A 120-amino-acid chain; its full sequence is Immunoglobulin kappa variable 2-29 (120 aa).

Residues 1-20 (MRLPAQLLGLLMLWIPGSSA) form the signal peptide. The interval 21-43 (DIVMTQTPLSLSVTPGQPASISC) is framework-1. The 100-residue stretch at 21-120 (DIVMTQTPLS…YYCMQGIHLP (100 aa)) folds into the Ig-like domain. A disulfide bridge connects residues C43 and C113. The complementarity-determining-1 stretch occupies residues 44 to 59 (KSSQSLLHSDGKTYLY). The interval 60-74 (WYLQKPGQSPQLLIY) is framework-2. Positions 75–81 (EVSSRFS) are complementarity-determining-2. The interval 82-113 (GVPDRFSGSGSGTDFTLKISRVEAEDVGVYYC) is framework-3. A complementarity-determining-3 region spans residues 114 to 120 (MQGIHLP).

As to quaternary structure, immunoglobulins are composed of two identical heavy chains and two identical light chains; disulfide-linked.

It localises to the secreted. Its subcellular location is the cell membrane. Functionally, v region of the variable domain of immunoglobulin light chains that participates in the antigen recognition. Immunoglobulins, also known as antibodies, are membrane-bound or secreted glycoproteins produced by B lymphocytes. In the recognition phase of humoral immunity, the membrane-bound immunoglobulins serve as receptors which, upon binding of a specific antigen, trigger the clonal expansion and differentiation of B lymphocytes into immunoglobulins-secreting plasma cells. Secreted immunoglobulins mediate the effector phase of humoral immunity, which results in the elimination of bound antigens. The antigen binding site is formed by the variable domain of one heavy chain, together with that of its associated light chain. Thus, each immunoglobulin has two antigen binding sites with remarkable affinity for a particular antigen. The variable domains are assembled by a process called V-(D)-J rearrangement and can then be subjected to somatic hypermutations which, after exposure to antigen and selection, allow affinity maturation for a particular antigen. This Homo sapiens (Human) protein is Immunoglobulin kappa variable 2-29.